The following is a 212-amino-acid chain: Photosynthetic NDH subunit of subcomplex B 5, chloroplastic (212 aa).

A chloroplast-targeting transit peptide spans 1 to 48 (MATVTILSPKSIPKVTDSKFGARVSDQIVNVVKCGKSGRRLKLAKLVS). The next 2 membrane-spanning stretches (helical) occupy residues 115–135 (FQGL…YFDA) and 136–156 (PGEY…IIEM).

As to quaternary structure, part of the chloroplast NDH complex, composed of a mixture of chloroplast and nucleus encoded subunits. Component of the NDH subcomplex B, at least composed of PnsB1, PnsB2, PnsB3, PnsB4 and PnsB5.

It localises to the plastid. Its subcellular location is the chloroplast membrane. In terms of biological role, NDH shuttles electrons from NAD(P)H:plastoquinone, via FMN and iron-sulfur (Fe-S) centers, to quinones in the photosynthetic chain and possibly in a chloroplast respiratory chain. The immediate electron acceptor for the enzyme in this species is believed to be plastoquinone. Couples the redox reaction to proton translocation, and thus conserves the redox energy in a proton gradient. The chain is Photosynthetic NDH subunit of subcomplex B 5, chloroplastic from Arabidopsis thaliana (Mouse-ear cress).